Consider the following 242-residue polypeptide: MSKSRLTVFSFVRRFLLRLMVVLAVFWGGGIALFSVAPVPFSAVMVERQVSAWLHGNFRYVAHSDRVSMDQISPWMGLAVIAAEDQTFPEHWGFDVASIEKALAHNERNENRIRGASTISQQTAKNLFLWDGRSWVRKGLEAGLTLGIETVWSKKRILTVYLNIAEFGDGVFGVEAAAQRYFHKPASKLTRSEAALLAAVLPNPLRFKVSAPSGYVRSRQAWILRQMYQLGGEPFMQQHQLD.

The helical transmembrane segment at 19–39 threads the bilayer; the sequence is LMVVLAVFWGGGIALFSVAPV.

This sequence belongs to the glycosyltransferase 51 family.

The protein resides in the cell inner membrane. It catalyses the reaction [GlcNAc-(1-&gt;4)-Mur2Ac(oyl-L-Ala-gamma-D-Glu-L-Lys-D-Ala-D-Ala)](n)-di-trans,octa-cis-undecaprenyl diphosphate + beta-D-GlcNAc-(1-&gt;4)-Mur2Ac(oyl-L-Ala-gamma-D-Glu-L-Lys-D-Ala-D-Ala)-di-trans,octa-cis-undecaprenyl diphosphate = [GlcNAc-(1-&gt;4)-Mur2Ac(oyl-L-Ala-gamma-D-Glu-L-Lys-D-Ala-D-Ala)](n+1)-di-trans,octa-cis-undecaprenyl diphosphate + di-trans,octa-cis-undecaprenyl diphosphate + H(+). Its pathway is cell wall biogenesis; peptidoglycan biosynthesis. Peptidoglycan polymerase that catalyzes glycan chain elongation from lipid-linked precursors. The polypeptide is Biosynthetic peptidoglycan transglycosylase (Escherichia coli O157:H7).